The chain runs to 319 residues: Protease HtpX homolog (319 aa).

The next 2 helical transmembrane spans lie at 6–26 (TAML…VIGG) and 28–48 (GGMM…YWNS). His130 lines the Zn(2+) pocket. Residue Glu131 is part of the active site. Residue His134 coordinates Zn(2+). The next 2 helical transmembrane spans lie at 145 to 165 (LTAT…FFGG) and 172 to 192 (PLGF…AMLV). Glu201 lines the Zn(2+) pocket. Positions 277-319 (MARETSTGSTAPVRPDNAGRKSRSVPRTGWGRGGSEPPKGPWS) are disordered.

Belongs to the peptidase M48B family. It depends on Zn(2+) as a cofactor.

It is found in the cell inner membrane. In Rhizobium meliloti (strain 1021) (Ensifer meliloti), this protein is Protease HtpX homolog.